The primary structure comprises 334 residues: Protein-glutamate methylesterase FrzG (334 aa).

The 188-residue stretch at 147–334 (PYPLVAIAAS…AALMQWVDVC (188 aa)) folds into the CheB-type methylesterase domain. Catalysis depends on residues serine 156, histidine 183, and aspartate 276.

It carries out the reaction [protein]-L-glutamate 5-O-methyl ester + H2O = L-glutamyl-[protein] + methanol + H(+). Functionally, probable methylesterase. Required for the normal aggregation of M.xanthus cells during fruiting body formation. It is also a component of a sensory transduction pathway that controls the frequency at which cells reverse their gliding direction. It may remove the methyl group from the gamma-glutamyl methyl ester residues in FrzCD. The sequence is that of Protein-glutamate methylesterase FrzG (frzG) from Myxococcus xanthus.